Consider the following 369-residue polypeptide: Delta(14)-sterol reductase (369 aa).

7 helical membrane-spanning segments follow: residues 15-34 (QSVYVLVFYFVYLAVAGEIL), 54-76 (CNGLLALILLVAILGICAKLGIV), 86-105 (LELLSATFIFCVLVTLALYV), 146-168 (FFFVRAGMMGWLLINLSILAKSV), 178-195 (ILYQIFCALYILDYFVHE), 208-230 (RLGFMLVFGDLLWIPFTFSIQGW), and 240-262 (TVPAIVVNCLVFLIGYMVFRGAN). Residues Lys-265, Lys-269, Leu-289, Trp-294, and 301-302 (NY) contribute to the NADP(+) site. Residues 275–297 (PIWGKPPVVVGGKLLVSGYWGIA) form a helical membrane-spanning segment. The chain crosses the membrane as a helical span at residues 317 to 336 (GISSPVPYFYPIYLLILLIW). NADP(+) is bound by residues Asp-341, 345 to 349 (CAEKY), and Tyr-356.

It belongs to the ERG4/ERG24 family.

Its subcellular location is the membrane. The enzyme catalyses 4,4-dimethyl-5alpha-cholesta-8,24-dien-3beta-ol + NADP(+) = 4,4-dimethyl-5alpha-cholesta-8,14,24-trien-3beta-ol + NADPH + H(+). Its pathway is steroid biosynthesis; zymosterol biosynthesis; zymosterol from lanosterol: step 2/6. In terms of biological role, reduces the C14=C15 double bond of 4,4-dimethyl-cholesta-8,14,24-trienol to produce 4,4-dimethyl-cholesta-8,24-dienol. Required for cell division and expansion and is involved in proper organization of the embryo. In Arabidopsis thaliana (Mouse-ear cress), this protein is Delta(14)-sterol reductase (FK).